The sequence spans 257 residues: UPF0246 protein Rsph17029_0026 (257 aa).

The protein belongs to the UPF0246 family.

The polypeptide is UPF0246 protein Rsph17029_0026 (Cereibacter sphaeroides (strain ATCC 17029 / ATH 2.4.9) (Rhodobacter sphaeroides)).